The chain runs to 156 residues: Small ribosomal subunit protein uS7 (156 aa).

This sequence belongs to the universal ribosomal protein uS7 family. Part of the 30S ribosomal subunit. Contacts proteins S9 and S11.

Functionally, one of the primary rRNA binding proteins, it binds directly to 16S rRNA where it nucleates assembly of the head domain of the 30S subunit. Is located at the subunit interface close to the decoding center, probably blocks exit of the E-site tRNA. This is Small ribosomal subunit protein uS7 from Carboxydothermus hydrogenoformans (strain ATCC BAA-161 / DSM 6008 / Z-2901).